Consider the following 363-residue polypeptide: 3-dehydroquinate synthase (363 aa).

NAD(+) is bound by residues Ser-72–Lys-77, Thr-130–Thr-131, Lys-142, and Lys-151. Positions 184, 247, and 264 each coordinate Zn(2+).

It belongs to the sugar phosphate cyclases superfamily. Dehydroquinate synthase family. It depends on Co(2+) as a cofactor. Zn(2+) serves as cofactor. The cofactor is NAD(+).

The protein resides in the cytoplasm. It carries out the reaction 7-phospho-2-dehydro-3-deoxy-D-arabino-heptonate = 3-dehydroquinate + phosphate. The protein operates within metabolic intermediate biosynthesis; chorismate biosynthesis; chorismate from D-erythrose 4-phosphate and phosphoenolpyruvate: step 2/7. Catalyzes the conversion of 3-deoxy-D-arabino-heptulosonate 7-phosphate (DAHP) to dehydroquinate (DHQ). This chain is 3-dehydroquinate synthase, found in Bacillus anthracis (strain A0248).